A 435-amino-acid polypeptide reads, in one-letter code: Adenylosuccinate synthetase (435 aa).

GTP is bound by residues 11–17 (GDEGKGK) and 39–41 (GHT). Aspartate 12 serves as the catalytic Proton acceptor. Residues aspartate 12 and glycine 39 each contribute to the Mg(2+) site. Residues 12–15 (DEGK), 37–40 (NAGH), threonine 128, arginine 142, glutamine 223, threonine 238, and arginine 302 each bind IMP. Histidine 40 acts as the Proton donor in catalysis. 298-304 (SVTGRPR) lines the substrate pocket. Residues arginine 304, 330 to 332 (KLD), and 412 to 414 (STG) each bind GTP.

Belongs to the adenylosuccinate synthetase family. In terms of assembly, homodimer. Mg(2+) serves as cofactor.

The protein resides in the cytoplasm. The enzyme catalyses IMP + L-aspartate + GTP = N(6)-(1,2-dicarboxyethyl)-AMP + GDP + phosphate + 2 H(+). The protein operates within purine metabolism; AMP biosynthesis via de novo pathway; AMP from IMP: step 1/2. Its function is as follows. Plays an important role in the de novo pathway of purine nucleotide biosynthesis. Catalyzes the first committed step in the biosynthesis of AMP from IMP. This chain is Adenylosuccinate synthetase, found in Coxiella burnetii (strain RSA 331 / Henzerling II).